Reading from the N-terminus, the 1007-residue chain is Protocadherin alpha-C2 (1007 aa).

Residues 1 to 42 form the signal peptide; sequence MEQAGTRPAATEHPRLRRPMPWLLLLPLLLLLLLLLPGPAAS. Cadherin domains follow at residues 43–148, 149–257, 258–365, 374–469, and 470–579; these read QLRY…SPRF, PRPN…SPAF, DQST…APEV, VPEN…PPSF, and LEDS…APHI. Residues 43-708 are Extracellular-facing; the sequence is QLRYSVPEEQ…RTYSEITLYL (666 aa). N-linked (GlcNAc...) asparagine glycans are attached at residues N280 and N436. Residues N586 and N657 are each glycosylated (N-linked (GlcNAc...) asparagine). Positions 594–691 constitute a Cadherin 6 domain; it reads VPRTAPAGYL…DRVSKILPDT (98 aa). A helical transmembrane segment spans residues 709–729; it reads IIALSTVSFIFLLTIIILSII. Residues 730–1007 are Cytoplasmic-facing; the sequence is KCYRYTAYGT…GNSTTDNSDQ (278 aa). 4 PXXP repeats span residues 856–859, 889–892, 930–933, and 948–951; these read PRQP, PGGP, PGNP, and PGSP. The 4 X 4 AA repeats of P-X-X-P stretch occupies residues 856 to 951; it reads PRQPNPDWRY…PDKFIIPGSP (96 aa). A disordered region spans residues 885–1007; that stretch reads LRAGPGGPDQ…GNSTTDNSDQ (123 aa). Residues 966–980 show a composition bias toward basic and acidic residues; that stretch reads DKSDFITFGKKEETK.

The protein localises to the cell membrane. Functionally, potential calcium-dependent cell-adhesion protein. May be involved in the establishment and maintenance of specific neuronal connections in the brain. The sequence is that of Protocadherin alpha-C2 (PCDHAC2) from Homo sapiens (Human).